Reading from the N-terminus, the 162-residue chain is Large ribosomal subunit protein uL15 (162 aa).

The segment at 1 to 41 is disordered; the sequence is MKLSDIADNAGSRKKRMRVGRGIGSGKGKTAGRGGKGQTAR. The segment covering 21–37 has biased composition (gly residues); the sequence is RGIGSGKGKTAGRGGKG.

Belongs to the universal ribosomal protein uL15 family. As to quaternary structure, part of the 50S ribosomal subunit.

Binds to the 23S rRNA. In Rhodopseudomonas palustris (strain BisB18), this protein is Large ribosomal subunit protein uL15.